Reading from the N-terminus, the 75-residue chain is Guanine nucleotide-binding protein G(I)/G(S)/G(O) subunit gamma-4 (75 aa).

Cys-72 carries the cysteine methyl ester modification. Residue Cys-72 is the site of S-geranylgeranyl cysteine attachment. Residues 73–75 constitute a propeptide, removed in mature form; that stretch reads TIL.

The protein belongs to the G protein gamma family. As to quaternary structure, g proteins are composed of 3 units, alpha, beta and gamma. Interacts with beta-1 and beta-2, but not with beta-3. Interacts with KCNK1. Interacts (via C-terminus) with KCNK2/TREK-1 (via N-terminus); this interaction confers ion selectivity to Cl(-) and L-glutamate. In terms of tissue distribution, brain, kidney, pancreas, skeletal muscle and faintly in cardiac muscle.

The protein localises to the cell membrane. Guanine nucleotide-binding proteins (G proteins) are involved as a modulator or transducer in various transmembrane signaling systems. The beta and gamma chains are required for the GTPase activity, for replacement of GDP by GTP, and for G protein-effector interaction. The polypeptide is Guanine nucleotide-binding protein G(I)/G(S)/G(O) subunit gamma-4 (GNG4) (Homo sapiens (Human)).